The primary structure comprises 873 residues: Alanine--tRNA ligase (873 aa).

4 residues coordinate Zn(2+): His562, His566, Cys663, and His667.

The protein belongs to the class-II aminoacyl-tRNA synthetase family. It depends on Zn(2+) as a cofactor.

It localises to the cytoplasm. The enzyme catalyses tRNA(Ala) + L-alanine + ATP = L-alanyl-tRNA(Ala) + AMP + diphosphate. Its function is as follows. Catalyzes the attachment of alanine to tRNA(Ala) in a two-step reaction: alanine is first activated by ATP to form Ala-AMP and then transferred to the acceptor end of tRNA(Ala). Also edits incorrectly charged Ser-tRNA(Ala) and Gly-tRNA(Ala) via its editing domain. The protein is Alanine--tRNA ligase of Bordetella avium (strain 197N).